Here is a 217-residue protein sequence, read N- to C-terminus: 2-phospho-L-lactate guanylyltransferase (217 aa).

The protein belongs to the CofC family. In terms of assembly, homodimer.

The catalysed reaction is (2S)-2-phospholactate + GTP + H(+) = (2S)-lactyl-2-diphospho-5'-guanosine + diphosphate. It functions in the pathway cofactor biosynthesis; coenzyme F420 biosynthesis. Its function is as follows. Guanylyltransferase that catalyzes the activation of (2S)-2-phospholactate (2-PL) as (2S)-lactyl-2-diphospho-5'-guanosine, via the condensation of 2-PL with GTP. It is involved in the biosynthesis of coenzyme F420, a hydride carrier cofactor. The protein is 2-phospho-L-lactate guanylyltransferase of Halorubrum lacusprofundi (strain ATCC 49239 / DSM 5036 / JCM 8891 / ACAM 34).